Here is a 562-residue protein sequence, read N- to C-terminus: Sulfite reductase [NADPH] hemoprotein beta-component (562 aa).

[4Fe-4S] cluster contacts are provided by cysteine 428, cysteine 434, cysteine 473, and cysteine 477. Cysteine 477 contacts siroheme.

It belongs to the nitrite and sulfite reductase 4Fe-4S domain family. In terms of assembly, alpha(8)-beta(8). The alpha component is a flavoprotein, the beta component is a hemoprotein. The cofactor is siroheme. Requires [4Fe-4S] cluster as cofactor.

The catalysed reaction is hydrogen sulfide + 3 NADP(+) + 3 H2O = sulfite + 3 NADPH + 4 H(+). The protein operates within sulfur metabolism; hydrogen sulfide biosynthesis; hydrogen sulfide from sulfite (NADPH route): step 1/1. Functionally, component of the sulfite reductase complex that catalyzes the 6-electron reduction of sulfite to sulfide. This is one of several activities required for the biosynthesis of L-cysteine from sulfate. This is Sulfite reductase [NADPH] hemoprotein beta-component from Myxococcus xanthus (strain DK1622).